The following is a 354-amino-acid chain: Guanine nucleotide-binding protein G(i) subunit alpha-1 (354 aa).

The N-myristoyl glycine moiety is linked to residue G2. The S-palmitoyl cysteine moiety is linked to residue C3. The G-alpha domain maps to 32-354 (REVKLLLLGA…KNNLKDCGLF (323 aa)). The interval 35-48 (KLLLLGAGESGKST) is G1 motif. GTP-binding positions include 43-48 (ESGKST), 150-151 (DS), and 175-178 (LRTR). S47 is a Mg(2+) binding site. Positions 173–181 (DVLRTRVKT) are G2 motif. T181 is a Mg(2+) binding site. The G3 motif stretch occupies residues 196–205 (FKMFDVGGQR). Residues 200-204 (DVGGQ), 269-272 (NKKD), and A326 each bind GTP. Residues 265 to 272 (ILFLNKKD) are G4 motif. A G5 motif region spans residues 324–329 (TCATDT).

This sequence belongs to the G-alpha family. G(i/o/t/z) subfamily. As to quaternary structure, heterotrimeric G proteins are composed of 3 units; alpha, beta and gamma. The alpha chain contains the guanine nucleotide binding site. Part of a spindle orientation complex at least composed of GNAI1, GPSM2 and NUMA1. Identified in complex with the beta subunit GNB1 and the gamma subunit GNG1. Identified in complex with the beta subunit GNB1 and the gamma subunit GNG2. Component of the TAS2R14-GNAI1 complex, consisting of TAS2R14, GNAI1, GNB1 and GNG2; within the complex interacts with TAS2R14; this complex plays a role in the perception of bitterness. GTP binding causes dissociation of the heterotrimer, liberating the individual subunits so that they can interact with downstream effector proteins. Interacts (GDP-bound form) with GPSM1; this inhibits guanine nucleotide exchange and GTP binding. Interacts (GDP-bound form) with GPSM2 (via GoLoco domains); this inhibits guanine nucleotide exchange. Interacts with RGS10; this strongly enhances GTP hydrolysis. Interacts with RGS1 and RGS16. Interacts with RGS4. Interacts with RGS12. Interacts (via active GTP- or inactive GDP-bound forms) with RGS14 (via RGS and GoLoco domains). Interacts with RGS3, RGS6, RGS7, RGS8, RGS17, RGS18 and RGS20 (in vitro). Interacts (GDP-bound form) with RIC8A (via C-terminus); promoting GNAI1 folding and association with the plasma membrane. Interacts (inactive GDP-bound form) with NUCB1 (via GBA motif); the interaction leads to activation of GNAI1. Interacts (inactive GDP-bound form) with CCDC88C/DAPLE (via GBA motif); the interaction leads to activation of GNAI1. Interacts (inactive GDP-bound form) with CCDC8A/GIV (via GBA motif). Interacts with GPR15. Myristoylation at Gly-2 is required for membrane anchoring before palmitoylation. Post-translationally, palmitoylation at Cys-3 varies with membrane lipid composition.

It localises to the nucleus. The protein localises to the cytoplasm. Its subcellular location is the cell membrane. It is found in the cytoskeleton. The protein resides in the microtubule organizing center. It localises to the centrosome. The protein localises to the cell cortex. Its subcellular location is the membrane. The catalysed reaction is GTP + H2O = GDP + phosphate + H(+). In terms of biological role, guanine nucleotide-binding proteins (G proteins) function as transducers downstream of G protein-coupled receptors (GPCRs) in numerous signaling cascades. The alpha chain contains the guanine nucleotide binding site and alternates between an active, GTP-bound state and an inactive, GDP-bound state. Signaling by an activated GPCR promotes GDP release and GTP binding. The alpha subunit has a low GTPase activity that converts bound GTP to GDP, thereby terminating the signal. Both GDP release and GTP hydrolysis are modulated by numerous regulatory proteins. Signaling is mediated via effector proteins, such as adenylate cyclase. Inhibits adenylate cyclase activity of ADCY1, ADCY5 and ADCY6, leading to decreased intracellular cAMP levels. The inactive GDP-bound form prevents the association of RGS14 with centrosomes and is required for the translocation of RGS14 from the cytoplasm to the plasma membrane. Required for normal cytokinesis during mitosis. Required for cortical dynein-dynactin complex recruitment during metaphase. The polypeptide is Guanine nucleotide-binding protein G(i) subunit alpha-1 (Gnai1) (Rattus norvegicus (Rat)).